The following is an 876-amino-acid chain: Alanine--tRNA ligase (876 aa).

Zn(2+)-binding residues include H562, H566, C666, and H670.

Belongs to the class-II aminoacyl-tRNA synthetase family. Requires Zn(2+) as cofactor.

It localises to the cytoplasm. The enzyme catalyses tRNA(Ala) + L-alanine + ATP = L-alanyl-tRNA(Ala) + AMP + diphosphate. Catalyzes the attachment of alanine to tRNA(Ala) in a two-step reaction: alanine is first activated by ATP to form Ala-AMP and then transferred to the acceptor end of tRNA(Ala). Also edits incorrectly charged Ser-tRNA(Ala) and Gly-tRNA(Ala) via its editing domain. In Marinobacter nauticus (strain ATCC 700491 / DSM 11845 / VT8) (Marinobacter aquaeolei), this protein is Alanine--tRNA ligase.